A 335-amino-acid chain; its full sequence is Dihydroorotate dehydrogenase (quinone) (335 aa).

Residues 58-62 and Thr82 each bind FMN; that span reads AGADK. Substrate is bound at residue Lys62. Residue 107–111 participates in substrate binding; the sequence is NRNGF. Residues Asn135 and Asn168 each coordinate FMN. Residue Asn168 participates in substrate binding. Ser171 (nucleophile) is an active-site residue. Residue Asn173 participates in substrate binding. 2 residues coordinate FMN: Lys213 and Gly241. 242–243 is a binding site for substrate; the sequence is NT. Residues Gly264, Gly293, and 314-315 each bind FMN; that span reads YS.

This sequence belongs to the dihydroorotate dehydrogenase family. Type 2 subfamily. As to quaternary structure, monomer. FMN is required as a cofactor.

The protein resides in the cell membrane. The catalysed reaction is (S)-dihydroorotate + a quinone = orotate + a quinol. It functions in the pathway pyrimidine metabolism; UMP biosynthesis via de novo pathway; orotate from (S)-dihydroorotate (quinone route): step 1/1. Functionally, catalyzes the conversion of dihydroorotate to orotate with quinone as electron acceptor. The protein is Dihydroorotate dehydrogenase (quinone) of Actinobacillus pleuropneumoniae serotype 3 (strain JL03).